The primary structure comprises 243 residues: Venom nerve growth factor (243 aa).

A signal peptide spans 1 to 18 (MSMLCYTLIIVFLIGIWA). Residues 19 to 125 (APKSEDNVPL…TLNRNIRAKR (107 aa)) constitute a propeptide that is removed on maturation. Positions 47-66 (GLKTSRNTDQRHPAPKKAED) are enriched in basic and acidic residues. The interval 47–69 (GLKTSRNTDQRHPAPKKAEDQEL) is disordered. Cystine bridges form between C139–C204, C182–C232, and C192–C234. The N-linked (GlcNAc...) asparagine glycan is linked to N148.

Belongs to the NGF-beta family. As to quaternary structure, homodimer; non-covalently linked. Expressed by the venom gland.

Its subcellular location is the secreted. Functionally, nerve growth factor is important for the development and maintenance of the sympathetic and sensory nervous systems. It stimulates division and differentiation of sympathetic and embryonic sensory neurons as well as basal forebrain cholinergic neurons in the brain. Its relevance in the snake venom is not clear. However, it has been shown to inhibit metalloproteinase-dependent proteolysis of platelet glycoprotein Ib alpha, suggesting a metalloproteinase inhibition to prevent metalloprotease autodigestion and/or protection against prey proteases. Binds a lipid between the two protein chains in the homodimer. The lipid-bound form promotes histamine relase from mouse mast cells, contrary to the lipid-free form. This Oxyuranus scutellatus scutellatus (Australian taipan) protein is Venom nerve growth factor.